Reading from the N-terminus, the 219-residue chain is Elongation factor Ts (219 aa).

Residues 82–85 (TDFV) are involved in Mg(2+) ion dislocation from EF-Tu.

Belongs to the EF-Ts family.

Its subcellular location is the cytoplasm. In terms of biological role, associates with the EF-Tu.GDP complex and induces the exchange of GDP to GTP. It remains bound to the aminoacyl-tRNA.EF-Tu.GTP complex up to the GTP hydrolysis stage on the ribosome. This chain is Elongation factor Ts, found in Anaeromyxobacter sp. (strain Fw109-5).